Reading from the N-terminus, the 616-residue chain is Dihydroxy-acid dehydratase (616 aa).

D81 serves as a coordination point for Mg(2+). Residue C122 coordinates [2Fe-2S] cluster. Mg(2+) contacts are provided by D123 and K124. K124 bears the N6-carboxylysine mark. C195 is a binding site for [2Fe-2S] cluster. E491 serves as a coordination point for Mg(2+). The active-site Proton acceptor is S517.

The protein belongs to the IlvD/Edd family. Homodimer. [2Fe-2S] cluster serves as cofactor. Requires Mg(2+) as cofactor.

The catalysed reaction is (2R)-2,3-dihydroxy-3-methylbutanoate = 3-methyl-2-oxobutanoate + H2O. It catalyses the reaction (2R,3R)-2,3-dihydroxy-3-methylpentanoate = (S)-3-methyl-2-oxopentanoate + H2O. The protein operates within amino-acid biosynthesis; L-isoleucine biosynthesis; L-isoleucine from 2-oxobutanoate: step 3/4. It functions in the pathway amino-acid biosynthesis; L-valine biosynthesis; L-valine from pyruvate: step 3/4. Functionally, functions in the biosynthesis of branched-chain amino acids. Catalyzes the dehydration of (2R,3R)-2,3-dihydroxy-3-methylpentanoate (2,3-dihydroxy-3-methylvalerate) into 2-oxo-3-methylpentanoate (2-oxo-3-methylvalerate) and of (2R)-2,3-dihydroxy-3-methylbutanoate (2,3-dihydroxyisovalerate) into 2-oxo-3-methylbutanoate (2-oxoisovalerate), the penultimate precursor to L-isoleucine and L-valine, respectively. This is Dihydroxy-acid dehydratase from Salmonella typhi.